The following is a 102-amino-acid chain: Chorion protein S15 (102 aa).

Residues 1–18 (MKFLIAFVAIAFFACVSA) form the signal peptide.

The protein belongs to the chorion protein S15/S18 family.

The protein resides in the secreted. Chorion membrane (egg shell) protein; plays a role in protecting the egg from the environment. The sequence is that of Chorion protein S15 (Cp15) from Drosophila grimshawi (Hawaiian fruit fly).